Here is a 573-residue protein sequence, read N- to C-terminus: Kinesin light chain 1 (573 aa).

The stretch at 27–156 forms a coiled coil; that stretch reads KTKQVIQGLE…HLEFMNQLKK (130 aa). The segment covering 155–176 has biased composition (basic and acidic residues); the sequence is KKYDDDISPSEDKDTDSTKEPL. The disordered stretch occupies residues 155-203; it reads KKYDDDISPSEDKDTDSTKEPLDDLFPNDEDDPGQGIQQQHSSAAAAAQ. A Phosphoserine modification is found at S162. The span at 188-203 shows a compositional bias: low complexity; that stretch reads GQGIQQQHSSAAAAAQ. TPR repeat units lie at residues 213–246, 255–288, 297–330, 339–372, and 381–414; these read LRTLHNLVIQYASQGRYEVAVPLCKQALEDLEKT, ATMLNILALVYRDQNKYKDAANLLNDALAIREKT, AATLNNLAVLYGKRGKYKEAEPLCKRALEIREKV, AKQLNNLALLCQNQGKYEEVEYYYQRALEIYQTK, and AKTKNNLASCYLKQGKFKQAETLYKEILTRAHER. Y449 is subject to Phosphotyrosine. Residue S460 is modified to Phosphoserine. The TPR 6 repeat unit spans residues 464 to 497; that stretch reads TTTLKNLGALYRRQGKFEAAETLEEAAMRSRKQG. S521 and S524 each carry phosphoserine; by AMPK. Residue E547 is modified to Phosphoserine. Residues 553–573 form a disordered region; it reads SGRASFCGKRQQQQWPGRRHR.

The protein belongs to the kinesin light chain family. In terms of assembly, oligomeric complex composed of two heavy chains and two light chains. Interacts with SPAG9. Interacts with ATCAY; may link mitochondria to KLC1 and regulate mitochondria localization into neuron projections. Interacts (via TPR repeats) with TOR1A; the interaction associates TOR1A with the kinesin oligomeric complex. Interacts with BORCS5. Interacts with MAPK8IP3/JIP3 and NTRK2/TRKB; interaction with NTRK2/TRKB is mediated by MAPK8IP3/JIP3. Interacts with CLSTN1; phosphorylation at Ser-460 inhibits interaction with CLSTN1. (Microbial infection) Interacts with adenovirus hexon-interlacing protein; this interaction leads to capsid disruption at the nuclear pore complex during virus entry into host cell. Post-translationally, phosphorylation at Ser-460 by ERK inhibits interaction with CLSTN1 and localization to cytoplasmic vesicles. As to expression, found in a variety of tissues. Mostly abundant in brain and spine.

Its subcellular location is the cell projection. It is found in the growth cone. It localises to the cytoplasmic vesicle. The protein localises to the cytoplasm. The protein resides in the cytoskeleton. Functionally, kinesin is a microtubule-associated force-producing protein that may play a role in organelle transport. The light chain may function in coupling of cargo to the heavy chain or in the modulation of its ATPase activity. This Homo sapiens (Human) protein is Kinesin light chain 1 (KLC1).